Here is a 65-residue protein sequence, read N- to C-terminus: NADH dehydrogenase [ubiquinone] 1 alpha subcomplex subunit 1 (65 aa).

A helical transmembrane segment spans residues 3-23 (LVWLEAMLPLGIIGGMLCIMG).

This sequence belongs to the complex I NDUFA1 subunit family. In terms of assembly, complex I is composed of at least 49 different subunits.

The protein localises to the mitochondrion inner membrane. Accessory subunit of the mitochondrial membrane respiratory chain NADH dehydrogenase (Complex I), that is believed not to be involved in catalysis. Complex I functions in the transfer of electrons from NADH to the respiratory chain. The immediate electron acceptor for the enzyme is believed to be ubiquinone. The protein is NADH dehydrogenase [ubiquinone] 1 alpha subcomplex subunit 1 of Arabidopsis thaliana (Mouse-ear cress).